The sequence spans 88 residues: Eclosion hormone (88 aa).

Residues 1–26 form the signal peptide; that stretch reads MAGKVTVAFFMFAMIAFLANFGYVEC. 3 disulfide bridges follow: cysteine 40/cysteine 64, cysteine 44/cysteine 60, and cysteine 47/cysteine 75.

Belongs to the insect eclosion hormone family.

The protein resides in the secreted. Functionally, neuropeptide that triggers the performance of ecdysis behaviors at the end of a molt. It triggers adult behavior patterns: larval, pupal and adult ecdysis, and plasticization during the molt. The polypeptide is Eclosion hormone (Manduca sexta (Tobacco hawkmoth)).